A 131-amino-acid polypeptide reads, in one-letter code: Profilin (131 aa).

This sequence belongs to the profilin family. In terms of assembly, occurs in many kinds of cells as a complex with monomeric actin in a 1:1 ratio.

The protein localises to the cytoplasm. Its subcellular location is the cytoskeleton. Functionally, binds to actin and affects the structure of the cytoskeleton. At high concentrations, profilin prevents the polymerization of actin, whereas it enhances it at low concentrations. By binding to PIP2, it inhibits the formation of IP3 and DG. This is Profilin from Citrus sinensis (Sweet orange).